The chain runs to 174 residues: Eukaryotic translation elongation factor 1 epsilon-1 (174 aa).

Residue A2 is modified to N-acetylalanine. Positions 2-56 are N-terminal; sequence AAAAELSLLEKSLGLSKGNKYSAQGERQIPVLQTNNGPSLTGLTTIAAHLVKQAN. The 124-residue stretch at 50–173 folds into the GST C-terminal domain; that stretch reads HLVKQANKEY…FIKNRLYTNS (124 aa). The interval 57 to 63 is linker; it reads KEYLLGS. A C-terminal region spans residues 64–152; that stretch reads TAEEKAIVQQ…SRWFCHIQHY (89 aa). N6-acetyllysine is present on K138. Residues 153 to 169 are a coiled coil; the sequence is PGIRQHLSSVVFIKNRL.

Part of a multisubunit complex that groups tRNA ligases for Arg (RARS1), Asp (DARS1), Gln (QARS1), Ile (IARS1), Leu (LARS1), Lys (KARS1), Met (MARS1) the bifunctional ligase for Glu and Pro (EPRS1) and the auxiliary subunits AIMP1/p43, AIMP2/p38 and EEF1E1/p18. Can interact simultaneously with MARS1 and EPRS1. Forms a linear complex that contains MARS1, EEF1E1, EPRS1 and AIMP2 that is at the core of the multisubunit complex. Interacts with ATM and ATR. The interaction with ATM, which takes place independently of TP53, is induced by DNA damage that may occur during genotoxic stress or cell growth. The interaction with ATR is enhanced by UV irradiation. As to expression, down-regulated in various cancer tissues.

Its subcellular location is the cytoplasm. It is found in the cytosol. It localises to the nucleus. In terms of biological role, positive modulator of ATM response to DNA damage. The protein is Eukaryotic translation elongation factor 1 epsilon-1 (EEF1E1) of Homo sapiens (Human).